The primary structure comprises 274 residues: Urease accessory protein UreD (274 aa).

It belongs to the UreD family. As to quaternary structure, ureD, UreF and UreG form a complex that acts as a GTP-hydrolysis-dependent molecular chaperone, activating the urease apoprotein by helping to assemble the nickel containing metallocenter of UreC. The UreE protein probably delivers the nickel.

Its subcellular location is the cytoplasm. Functionally, required for maturation of urease via the functional incorporation of the urease nickel metallocenter. In Klebsiella pneumoniae subsp. pneumoniae (strain ATCC 700721 / MGH 78578), this protein is Urease accessory protein UreD.